A 766-amino-acid chain; its full sequence is Subtilisin-like protease SBT4.15 (766 aa).

A signal peptide spans 1 to 23 (MVSNQRVRLFMLCFCLVNNAVIA). The propeptide at 24–113 (ATEDENVERK…VFKNTQRQLH (90 aa)) is activation peptide. The 79-residue stretch at 35-113 (YIVYMGEATE…VFKNTQRQLH (79 aa)) folds into the Inhibitor I9 domain. One can recognise a Peptidase S8 domain in the interval 117–601 (SWDFLGLVES…SGQINPRRAI (485 aa)). Aspartate 144 functions as the Charge relay system in the catalytic mechanism. An N-linked (GlcNAc...) asparagine glycan is attached at asparagine 175. Histidine 210 (charge relay system) is an active-site residue. Asparagine 233, asparagine 376, and asparagine 465 each carry an N-linked (GlcNAc...) asparagine glycan. The PA domain maps to 365–460 (MYPLTSGSLA…YVFFEDGTKI (96 aa)). The Charge relay system role is filled by serine 543. 3 N-linked (GlcNAc...) asparagine glycosylation sites follow: asparagine 624, asparagine 638, and asparagine 668.

This sequence belongs to the peptidase S8 family. In terms of processing, the C-terminal propeptide is autocleaved.

It localises to the secreted. This Arabidopsis thaliana (Mouse-ear cress) protein is Subtilisin-like protease SBT4.15.